Here is a 789-residue protein sequence, read N- to C-terminus: uncharacterized protein (789 aa).

Disordered regions lie at residues 107–326 (YQQD…NNNN), 426–491 (MLKS…NNNN), 523–625 (SVNF…ISNN), 666–751 (THTF…KGNN), and 765–789 (PTRFNNKNNNNSNGFTSNKRFYNQH). Positions 113 to 123 (NNTDDEQEQEQ) are enriched in acidic residues. Low complexity-rich tracts occupy residues 124–141 (EQQQKQNEIINKITTPIK), 151–194 (TSQT…ITPI), 201–213 (SISTSSSKQLRSS), and 225–270 (TSST…THNS). The segment covering 274 to 290 (IDDDDGDNNDEINDEND) has biased composition (acidic residues). Composition is skewed to low complexity over residues 291–326 (INSNNLTFSSSTKSKKINNNNNSIDSNNTNINNNNN) and 429–491 (SNNS…NNNN). The segment covering 523 to 549 (SVNFDRNQNQKSPFLNNTSMPNINFNE) has biased composition (polar residues). Low complexity-rich tracts occupy residues 550–581 (QSQQQSQNQYYQQQQQQQQQQSNNSMNQSINY), 602–617 (TSGSSLKYSTSSNNSK), 696–722 (HIMNSMNSNFNHHHNNNNQLFNNSGSN), and 766–789 (TRFNNKNNNNSNGFTSNKRFYNQH).

This is an uncharacterized protein from Dictyostelium discoideum (Social amoeba).